Reading from the N-terminus, the 635-residue chain is Cerevisin (635 aa).

Residues 1 to 19 (MKLENTLFTLGALGSISAA) form the signal peptide. A propeptide spanning residues 20 to 280 (LVIPNLENAA…VERDSIVEAT (261 aa)) is cleaved from the precursor. Composition is skewed to basic and acidic residues over residues 35–50 (INKE…VEFT), 74–85 (KGQDKESPEFNG), 94–109 (SAHE…HESS), and 126–136 (GCHENKVEEKK). The interval 35 to 155 (INKEDHHERP…KHHEKTLEKG (121 aa)) is disordered. The span at 137–155 (MKGKKVKGKKHHEKTLEKG) shows a compositional bias: basic residues. Residues 182-278 (RYIIVFKRGA…DFVERDSIVE (97 aa)) enclose the Inhibitor I9 domain. Residues 289–614 (PWGLARISHR…KQELNMDEFI (326 aa)) enclose the Peptidase S8 domain. Active-site charge relay system residues include aspartate 325 and histidine 357. An intrachain disulfide couples cysteine 460 to cysteine 491. Residue serine 519 is the Charge relay system of the active site. Positions 575-635 (DTPNVLIYNG…RDILDKLNII (61 aa)) are excised as a propeptide. The N-linked (GlcNAc...) asparagine glycan is linked to asparagine 594.

Belongs to the peptidase S8 family. Activated by N- and C-terminal proteolytic cleavage. Protease B (PrB/PRB1) processing requires at least 4 cleavages. First, the signal peptide is removed from the 76 kDa preproprotease B by signal peptidase in the ER. Then, PrB removes its own Pro-region (in trans) at the N-terminus, producing a 39 kDa form before exiting the ER. In the Golgi complex, the C-terminal Post-region of the 40 kDa proprotease B undergoes protease A (PrA/PEP4)-mediated processing to a 37 kDa intermediate, which in turn is quickly processed again by PrB in trans to yield the 31 kDa mature PrB. In terms of processing, glycosylated. Preproprotease B is a 76 kDa unglycosylated precursor that enters the endoplasmic reticulum (ER), where it receives one Asn-linked and an undetermined number of non-Asn-linked carbohydrate side chains. In the Golgi complex, the 39 kDa form becomes 40 kDa, due to elaboration of the Asn-linked side chain. The ultimate processing step removes a peptide containing the Asn-linked chain. Mature PrB has only non-Asn-linked carbohydrates.

It localises to the vacuole. It catalyses the reaction Hydrolysis of proteins with broad specificity, and of Bz-Arg-OEt &gt; Ac-Tyr-OEt. Does not hydrolyze peptide amides.. In terms of biological role, vacuolar proteinase B involved in protein degradation in the vacuole. Among other substrates, acts on carboxypeptidase Y (cpY/PRC1) to activate it by processing its Pro-peptide. Required for meiosis and spore formation, and for optimal survival in stationary phase. The protein is Cerevisin (PRB1) of Saccharomyces cerevisiae (strain ATCC 204508 / S288c) (Baker's yeast).